The chain runs to 319 residues: Acetyl-coenzyme A carboxylase carboxyl transferase subunit alpha (319 aa).

A CoA carboxyltransferase C-terminal domain is found at 35–296; that stretch reads NIDEEVHRLR…KTQLLADLAD (262 aa).

It belongs to the AccA family. Acetyl-CoA carboxylase is a heterohexamer composed of biotin carboxyl carrier protein (AccB), biotin carboxylase (AccC) and two subunits each of ACCase subunit alpha (AccA) and ACCase subunit beta (AccD).

It is found in the cytoplasm. It carries out the reaction N(6)-carboxybiotinyl-L-lysyl-[protein] + acetyl-CoA = N(6)-biotinyl-L-lysyl-[protein] + malonyl-CoA. Its pathway is lipid metabolism; malonyl-CoA biosynthesis; malonyl-CoA from acetyl-CoA: step 1/1. Its function is as follows. Component of the acetyl coenzyme A carboxylase (ACC) complex. First, biotin carboxylase catalyzes the carboxylation of biotin on its carrier protein (BCCP) and then the CO(2) group is transferred by the carboxyltransferase to acetyl-CoA to form malonyl-CoA. The polypeptide is Acetyl-coenzyme A carboxylase carboxyl transferase subunit alpha (Cronobacter sakazakii (strain ATCC BAA-894) (Enterobacter sakazakii)).